A 111-amino-acid chain; its full sequence is Large ribosomal subunit protein eL31 (111 aa).

It belongs to the eukaryotic ribosomal protein eL31 family.

This is Large ribosomal subunit protein eL31 (RPL31) from Tetrahymena thermophila (strain SB210).